The chain runs to 272 residues: 3-methyl-2-oxobutanoate hydroxymethyltransferase (272 aa).

Residues aspartate 51 and aspartate 90 each contribute to the Mg(2+) site. 3-methyl-2-oxobutanoate is bound by residues 51-52 (DS), aspartate 90, and lysine 120. Glutamate 122 is a Mg(2+) binding site. Glutamate 189 serves as the catalytic Proton acceptor.

The protein belongs to the PanB family. As to quaternary structure, homodecamer; pentamer of dimers. The cofactor is Mg(2+).

The protein localises to the cytoplasm. It catalyses the reaction 3-methyl-2-oxobutanoate + (6R)-5,10-methylene-5,6,7,8-tetrahydrofolate + H2O = 2-dehydropantoate + (6S)-5,6,7,8-tetrahydrofolate. It functions in the pathway cofactor biosynthesis; (R)-pantothenate biosynthesis; (R)-pantoate from 3-methyl-2-oxobutanoate: step 1/2. Functionally, catalyzes the reversible reaction in which hydroxymethyl group from 5,10-methylenetetrahydrofolate is transferred onto alpha-ketoisovalerate to form ketopantoate. This Syntrophus aciditrophicus (strain SB) protein is 3-methyl-2-oxobutanoate hydroxymethyltransferase.